The primary structure comprises 207 residues: Transcriptional regulator GfcR (207 aa).

This sequence belongs to the purine/pyrimidine phosphoribosyltransferase family. GfcR subfamily.

The polypeptide is Transcriptional regulator GfcR (Methanocella arvoryzae (strain DSM 22066 / NBRC 105507 / MRE50)).